Reading from the N-terminus, the 448-residue chain is tRNA-2-methylthio-N(6)-dimethylallyladenosine synthase (448 aa).

The MTTase N-terminal domain occupies 3 to 120; it reads KKLFIKTHGC…LPTMLDSRQG (118 aa). [4Fe-4S] cluster is bound by residues cysteine 12, cysteine 49, cysteine 83, cysteine 158, cysteine 162, and cysteine 165. The Radical SAM core domain occupies 144–376; that stretch reads TSDGATAFVS…QERLNQQTMQ (233 aa). The TRAM domain occupies 379 to 444; that stretch reads RRMVGNTERI…PNSLRGDLAS (66 aa).

Belongs to the methylthiotransferase family. MiaB subfamily. In terms of assembly, monomer. Requires [4Fe-4S] cluster as cofactor.

Its subcellular location is the cytoplasm. It carries out the reaction N(6)-dimethylallyladenosine(37) in tRNA + (sulfur carrier)-SH + AH2 + 2 S-adenosyl-L-methionine = 2-methylsulfanyl-N(6)-dimethylallyladenosine(37) in tRNA + (sulfur carrier)-H + 5'-deoxyadenosine + L-methionine + A + S-adenosyl-L-homocysteine + 2 H(+). In terms of biological role, catalyzes the methylthiolation of N6-(dimethylallyl)adenosine (i(6)A), leading to the formation of 2-methylthio-N6-(dimethylallyl)adenosine (ms(2)i(6)A) at position 37 in tRNAs that read codons beginning with uridine. In Chromohalobacter salexigens (strain ATCC BAA-138 / DSM 3043 / CIP 106854 / NCIMB 13768 / 1H11), this protein is tRNA-2-methylthio-N(6)-dimethylallyladenosine synthase.